We begin with the raw amino-acid sequence, 130 residues long: MAKQSVVKIKKKVKRVITDGVAHISASFNNTIVTITDRQGNSLFWCTSGASGFRGSRKCTPFAAQVAAEKAGRAVLDYGMKSLEVRINGPGPGRESAVRSLNNVGYKITNIIDVTPIPHNGCRPPKKRRV.

Belongs to the universal ribosomal protein uS11 family. Part of the 30S ribosomal subunit. Interacts with proteins S7 and S18. Binds to IF-3.

In terms of biological role, located on the platform of the 30S subunit, it bridges several disparate RNA helices of the 16S rRNA. Forms part of the Shine-Dalgarno cleft in the 70S ribosome. This Xylella fastidiosa (strain 9a5c) protein is Small ribosomal subunit protein uS11.